Consider the following 186-residue polypeptide: Ribosome rescue factor SmrB (186 aa).

The Smr domain maps to 99 to 174 (IDLHGLTQHQ…SDAAIIVIIE (76 aa)).

This sequence belongs to the SmrB family. As to quaternary structure, associates with collided ribosomes, but not with correctly translating polysomes.

In terms of biological role, acts as a ribosome collision sensor. Detects stalled/collided disomes (pairs of ribosomes where the leading ribosome is stalled and a second ribosome has collided with it) and endonucleolytically cleaves mRNA at the 5' boundary of the stalled ribosome. Stalled/collided disomes form a new interface (primarily via the 30S subunits) that binds SmrB. Cleaved mRNA becomes available for tmRNA ligation, leading to ribosomal subunit dissociation and rescue of stalled ribosomes. This Buchnera aphidicola subsp. Acyrthosiphon pisum (strain 5A) protein is Ribosome rescue factor SmrB.